The primary structure comprises 513 residues: Na(+)/H(+) antiporter NhaB (513 aa).

12 helical membrane-spanning segments follow: residues 23 to 43 (LALI…PFVA), 52 to 72 (IFTL…LLAI), 97 to 117 (LLLM…LFIF), 120 to 140 (LLLS…AAAF), 144 to 164 (FLDA…FYGI), 202 to 222 (LMMH…VGEP), 238 to 258 (FFLR…LTCL), 303 to 323 (AIIG…VGLI), 348 to 368 (TESL…AVII), 391 to 411 (LFYI…VGTI), 447 to 467 (ATPN…APLI), and 475 to 495 (VWMA…CVEF).

It belongs to the NhaB Na(+)/H(+) (TC 2.A.34) antiporter family.

It localises to the cell inner membrane. It catalyses the reaction 2 Na(+)(in) + 3 H(+)(out) = 2 Na(+)(out) + 3 H(+)(in). Its function is as follows. Na(+)/H(+) antiporter that extrudes sodium in exchange for external protons. This chain is Na(+)/H(+) antiporter NhaB, found in Escherichia coli O6:K15:H31 (strain 536 / UPEC).